A 317-amino-acid chain; its full sequence is D-alanine--D-alanine ligase (317 aa).

One can recognise an ATP-grasp domain in the interval Lys-111–Gln-308. Glu-137–Thr-192 lines the ATP pocket. Mg(2+) contacts are provided by Asp-262, Glu-275, and Asn-277.

It belongs to the D-alanine--D-alanine ligase family. Requires Mg(2+) as cofactor. The cofactor is Mn(2+).

Its subcellular location is the cytoplasm. The enzyme catalyses 2 D-alanine + ATP = D-alanyl-D-alanine + ADP + phosphate + H(+). It functions in the pathway cell wall biogenesis; peptidoglycan biosynthesis. Functionally, cell wall formation. The polypeptide is D-alanine--D-alanine ligase (Marinomonas sp. (strain MWYL1)).